An 83-amino-acid polypeptide reads, in one-letter code: Arminin 3b (83 aa).

Residues 1 to 18 (MKIVFAILFLTFIALTYA) form the signal peptide. Residues 19-57 (RSFEDLKEEIKNEIEKEIFDDLEEESDELDNNVKKFNDA) constitute a propeptide that is removed on maturation. The residue at position 80 (serine 80) is a Serine amide.

This sequence belongs to the arminin family. As to expression, expressed in entodermal epithelium along the body column.

It is found in the secreted. Its subcellular location is the target cell membrane. In terms of biological role, antimicrobial peptide with a broad-spectrum antimicrobial activity. Keeps its antibacterial activity under a wide range of salt concentrations that mimic physiological conditions of human blood, which is surprising, since Hydra is an obligate freshwater animal with nearly no salt tolerance. Does not affect red blood cells. The sequence is that of Arminin 3b from Hydra vulgaris (Hydra).